Reading from the N-terminus, the 678-residue chain is Methionine--tRNA ligase (678 aa).

The short motif at 14–24 (PYANGSIHLGH) is the 'HIGH' region element. The Zn(2+) site is built by cysteine 145, cysteine 148, cysteine 158, and cysteine 161. A 'KMSKS' region motif is present at residues 331–335 (KMSKS). Residue lysine 334 coordinates ATP. Residues 576 to 678 (AFAAVDLRIA…SGAKPGQRVK (103 aa)) form the tRNA-binding domain.

This sequence belongs to the class-I aminoacyl-tRNA synthetase family. MetG type 1 subfamily. Homodimer. Requires Zn(2+) as cofactor.

It is found in the cytoplasm. The enzyme catalyses tRNA(Met) + L-methionine + ATP = L-methionyl-tRNA(Met) + AMP + diphosphate. Is required not only for elongation of protein synthesis but also for the initiation of all mRNA translation through initiator tRNA(fMet) aminoacylation. This Pseudomonas aeruginosa (strain UCBPP-PA14) protein is Methionine--tRNA ligase.